Here is a 449-residue protein sequence, read N- to C-terminus: uncharacterized protein (449 aa).

The segment covering 1–11 (MLDAPEQDPVD) has biased composition (acidic residues). Residues 1–33 (MLDAPEQDPVDPGDPASPPHGEAEQPLPGPRWP) form a disordered region. A helical membrane pass occupies residues 45 to 65 (LLLTALGGLLIAGLVTAIPAV). A disordered region spans residues 349 to 449 (QPPVPPPDIP…PGPAEPAPAG (101 aa)). Residues 365–387 (PPIPLQLPTPRPAPPAQQLPSTP) are compositionally biased toward pro residues. Residues 409–418 (HAPASAAPAE) are compositionally biased toward low complexity. Residues 437 to 449 (ATPPGPAEPAPAG) show a composition bias toward pro residues.

It is found in the cell membrane. It localises to the secreted. Its function is as follows. May play a role in septum formation. This is an uncharacterized protein from Mycobacterium tuberculosis (strain CDC 1551 / Oshkosh).